Here is a 208-residue protein sequence, read N- to C-terminus: Small ribosomal subunit protein uS4A (208 aa).

One can recognise an S4 RNA-binding domain in the interval T98 to V164.

The protein belongs to the universal ribosomal protein uS4 family. As to quaternary structure, part of the 30S ribosomal subunit. Contacts protein S5. The interaction surface between S4 and S5 is involved in control of translational fidelity.

In terms of biological role, one of the primary rRNA binding proteins, it binds directly to 16S rRNA where it nucleates assembly of the body of the 30S subunit. Its function is as follows. With S5 and S12 plays an important role in translational accuracy. The chain is Small ribosomal subunit protein uS4A from Bdellovibrio bacteriovorus (strain ATCC 15356 / DSM 50701 / NCIMB 9529 / HD100).